We begin with the raw amino-acid sequence, 208 residues long: Phosphoheptose isomerase (208 aa).

The SIS domain occupies 38–200 (MAVTLAKGHK…LFENVLALQP (163 aa)). 53–55 (NGG) provides a ligand contact to substrate. Zn(2+)-binding residues include His62 and Glu66. Residues Glu66, 95–96 (ND), 121–123 (STS), Ser126, and Gln173 each bind substrate. Positions 173 and 181 each coordinate Zn(2+).

This sequence belongs to the SIS family. GmhA subfamily. Homotetramer. The cofactor is Zn(2+).

The protein resides in the cytoplasm. The catalysed reaction is 2 D-sedoheptulose 7-phosphate = D-glycero-alpha-D-manno-heptose 7-phosphate + D-glycero-beta-D-manno-heptose 7-phosphate. The protein operates within carbohydrate biosynthesis; D-glycero-D-manno-heptose 7-phosphate biosynthesis; D-glycero-alpha-D-manno-heptose 7-phosphate and D-glycero-beta-D-manno-heptose 7-phosphate from sedoheptulose 7-phosphate: step 1/1. Its function is as follows. Catalyzes the isomerization of sedoheptulose 7-phosphate in D-glycero-D-manno-heptose 7-phosphate. The sequence is that of Phosphoheptose isomerase from Nitratidesulfovibrio vulgaris (strain ATCC 29579 / DSM 644 / CCUG 34227 / NCIMB 8303 / VKM B-1760 / Hildenborough) (Desulfovibrio vulgaris).